A 160-amino-acid chain; its full sequence is Large ribosomal subunit protein uL30m (160 aa).

A mitochondrion-targeting transit peptide spans 1 to 34 (MAGVLRSVFQRPPGRLQTVKKGAESLIGTEWIRH). Residues 45-64 (VFQPRPEDHEKYGGDPQNPH) form a disordered region.

The protein belongs to the universal ribosomal protein uL30 family. Component of the mitochondrial ribosome large subunit (39S) which comprises a 16S rRNA and about 50 distinct proteins.

It is found in the mitochondrion. This is Large ribosomal subunit protein uL30m (Mrpl30) from Rattus norvegicus (Rat).